The chain runs to 112 residues: Large ribosomal subunit protein eL30z (112 aa).

The protein belongs to the eukaryotic ribosomal protein eL30 family.

In Arabidopsis thaliana (Mouse-ear cress), this protein is Large ribosomal subunit protein eL30z (RPL30A).